We begin with the raw amino-acid sequence, 476 residues long: Probable cytosolic Fe-S cluster assembly factor GJ13047 (476 aa).

The [4Fe-4S] cluster site is built by Cys23, Cys68, Cys71, Cys74, Cys187, Cys243, Cys395, and Cys399.

It belongs to the NARF family.

Its function is as follows. Component of the cytosolic iron-sulfur (Fe/S) protein assembly machinery. Required for maturation of extramitochondrial Fe/S proteins. The protein is Probable cytosolic Fe-S cluster assembly factor GJ13047 of Drosophila virilis (Fruit fly).